The sequence spans 364 residues: Alpha-2-HS-glycoprotein (364 aa).

Positions 1–15 form a signal peptide, or 17; sequence MKSFLLLFCLAQLCS. The Cystatin fetuin-A-type 1 domain maps to 27 to 133; sequence YKEPACDDPD…QFSVLFTKCD (107 aa). 6 disulfide bridges follow: cysteine 32–cysteine 355, cysteine 89–cysteine 100, cysteine 114–cysteine 132, cysteine 146–cysteine 149, cysteine 208–cysteine 219, and cysteine 230–cysteine 248. Asparagine 99 carries N-linked (GlcNAc...) asparagine glycosylation. Residues serine 134, serine 135, and serine 138 each carry the phosphoserine modification. Residues 144–256 enclose the Cystatin fetuin-A-type 2 domain; sequence KLCPDCPLLA…TCTLFQTQPV (113 aa). 2 N-linked (GlcNAc...) asparagine glycosylation sites follow: asparagine 156 and asparagine 176. Residue serine 301 is glycosylated (O-linked (GalNAc...) serine). Threonine 319 carries the post-translational modification Phosphothreonine. Phosphoserine occurs at positions 321, 325, 328, and 330. Residue threonine 339 is glycosylated (O-linked (GalNAc...) threonine).

The protein belongs to the fetuin family. Phosphorylated by FAM20C in the extracellular medium.

It is found in the secreted. The polypeptide is Alpha-2-HS-glycoprotein (AHSG) (Ovis aries (Sheep)).